Here is a 252-residue protein sequence, read N- to C-terminus: 3-deoxy-manno-octulosonate cytidylyltransferase (252 aa).

It belongs to the KdsB family.

It localises to the cytoplasm. The catalysed reaction is 3-deoxy-alpha-D-manno-oct-2-ulosonate + CTP = CMP-3-deoxy-beta-D-manno-octulosonate + diphosphate. Its pathway is nucleotide-sugar biosynthesis; CMP-3-deoxy-D-manno-octulosonate biosynthesis; CMP-3-deoxy-D-manno-octulosonate from 3-deoxy-D-manno-octulosonate and CTP: step 1/1. It functions in the pathway bacterial outer membrane biogenesis; lipopolysaccharide biosynthesis. In terms of biological role, activates KDO (a required 8-carbon sugar) for incorporation into bacterial lipopolysaccharide in Gram-negative bacteria. The sequence is that of 3-deoxy-manno-octulosonate cytidylyltransferase from Nitratidesulfovibrio vulgaris (strain DP4) (Desulfovibrio vulgaris).